The chain runs to 290 residues: 4-hydroxybenzoate octaprenyltransferase (290 aa).

7 helical membrane-spanning segments follow: residues 33 to 53 (LWAL…AVFV), 99 to 119 (LFVV…TMTI), 141 to 161 (LPQV…FAAV), 163 to 183 (ESVP…AVAY), 213 to 233 (FIIG…GWLN), 237 to 257 (WGYY…QKLI), and 268 to 288 (AFMN…MSYW).

The protein belongs to the UbiA prenyltransferase family. Mg(2+) is required as a cofactor.

The protein localises to the cell inner membrane. The enzyme catalyses all-trans-octaprenyl diphosphate + 4-hydroxybenzoate = 4-hydroxy-3-(all-trans-octaprenyl)benzoate + diphosphate. Its pathway is cofactor biosynthesis; ubiquinone biosynthesis. Catalyzes the prenylation of para-hydroxybenzoate (PHB) with an all-trans polyprenyl group. Mediates the second step in the final reaction sequence of ubiquinone-8 (UQ-8) biosynthesis, which is the condensation of the polyisoprenoid side chain with PHB, generating the first membrane-bound Q intermediate 3-octaprenyl-4-hydroxybenzoate. The protein is 4-hydroxybenzoate octaprenyltransferase of Escherichia fergusonii (strain ATCC 35469 / DSM 13698 / CCUG 18766 / IAM 14443 / JCM 21226 / LMG 7866 / NBRC 102419 / NCTC 12128 / CDC 0568-73).